Here is a 321-residue protein sequence, read N- to C-terminus: Ferredoxin--NADP reductase (321 aa).

Glu33, Gln41, Tyr46, Val86, Leu119, Asp277, and Ser318 together coordinate FAD.

The protein belongs to the ferredoxin--NADP reductase type 2 family. As to quaternary structure, homodimer. Requires FAD as cofactor.

The enzyme catalyses 2 reduced [2Fe-2S]-[ferredoxin] + NADP(+) + H(+) = 2 oxidized [2Fe-2S]-[ferredoxin] + NADPH. The polypeptide is Ferredoxin--NADP reductase (Lactococcus lactis subsp. lactis (strain IL1403) (Streptococcus lactis)).